Reading from the N-terminus, the 1670-residue chain is DNA-directed RNA polymerase I subunit 1 (1670 aa).

Zn(2+) is bound by residues Cys79, Cys82, Cys89, His92, Cys119, and Cys122. The segment at Glu154 to Val185 is disordered. Acidic residues predominate over residues Ser176–Val185. Zn(2+)-binding residues include Cys213 and Cys216. A disordered region spans residues Thr255–Phe293. Over residues Asp262–Asp279 the composition is skewed to acidic residues. Residues Lys280–Phe293 show a composition bias toward basic and acidic residues. Positions 602, 604, and 606 each coordinate Mg(2+). The bridging helix stretch occupies residues Pro1005–Glu1017. The segment at Thr1318 to Phe1437 is disordered. 3 stretches are compositionally biased toward acidic residues: residues Asp1339–Gly1354, Asp1366–Asn1379, and Glu1388–Thr1399. Residues Glu1415–Gln1429 are compositionally biased toward basic and acidic residues.

The protein belongs to the RNA polymerase beta' chain family. As to quaternary structure, component of the RNA polymerase I (Pol I) complex consisting of at least 13 subunits.

It is found in the nucleus. The enzyme catalyses RNA(n) + a ribonucleoside 5'-triphosphate = RNA(n+1) + diphosphate. Its function is as follows. DNA-dependent RNA polymerase catalyzes the transcription of DNA into RNA using the four ribonucleoside triphosphates as substrates. Largest and catalytic core component of RNA polymerase I which synthesizes ribosomal RNA precursors. Forms the polymerase active center together with the second largest subunit. A single stranded DNA template strand of the promoter is positioned within the central active site cleft of Pol I. A bridging helix emanates from NRPA1 and crosses the cleft near the catalytic site and is thought to promote translocation of Pol I by acting as a ratchet that moves the RNA-DNA hybrid through the active site by switching from straight to bent conformations at each step of nucleotide addition. This Arabidopsis thaliana (Mouse-ear cress) protein is DNA-directed RNA polymerase I subunit 1.